A 418-amino-acid chain; its full sequence is Serine--tRNA ligase (418 aa).

Residue 231–233 (TAE) participates in L-serine binding. 262–264 (RRE) lines the ATP pocket. Glutamate 285 provides a ligand contact to L-serine. ATP is bound at residue 349–352 (EISS). Serine 384 contacts L-serine.

This sequence belongs to the class-II aminoacyl-tRNA synthetase family. Type-1 seryl-tRNA synthetase subfamily. As to quaternary structure, homodimer. The tRNA molecule binds across the dimer.

The protein resides in the cytoplasm. It catalyses the reaction tRNA(Ser) + L-serine + ATP = L-seryl-tRNA(Ser) + AMP + diphosphate + H(+). It carries out the reaction tRNA(Sec) + L-serine + ATP = L-seryl-tRNA(Sec) + AMP + diphosphate + H(+). It participates in aminoacyl-tRNA biosynthesis; selenocysteinyl-tRNA(Sec) biosynthesis; L-seryl-tRNA(Sec) from L-serine and tRNA(Sec): step 1/1. Functionally, catalyzes the attachment of serine to tRNA(Ser). Is also able to aminoacylate tRNA(Sec) with serine, to form the misacylated tRNA L-seryl-tRNA(Sec), which will be further converted into selenocysteinyl-tRNA(Sec). The protein is Serine--tRNA ligase of Coprothermobacter proteolyticus (strain ATCC 35245 / DSM 5265 / OCM 4 / BT).